The primary structure comprises 343 residues: Methionine synthase (343 aa).

His-211, Cys-213, Glu-236, and Cys-315 together coordinate Zn(2+).

It belongs to the archaeal MetE family. It depends on Zn(2+) as a cofactor.

It functions in the pathway amino-acid biosynthesis; L-methionine biosynthesis via de novo pathway. Its function is as follows. Catalyzes the transfer of a methyl group to L-homocysteine resulting in methionine formation. The physiological methyl donor is unknown. The polypeptide is Methionine synthase (Thermoplasma acidophilum (strain ATCC 25905 / DSM 1728 / JCM 9062 / NBRC 15155 / AMRC-C165)).